We begin with the raw amino-acid sequence, 409 residues long: Arginine deiminase (409 aa).

The active-site Amidino-cysteine intermediate is Cys399.

Belongs to the arginine deiminase family.

Its subcellular location is the cytoplasm. The catalysed reaction is L-arginine + H2O = L-citrulline + NH4(+). It functions in the pathway amino-acid degradation; L-arginine degradation via ADI pathway; carbamoyl phosphate from L-arginine: step 1/2. This is Arginine deiminase from Streptococcus pneumoniae (strain JJA).